Here is a 569-residue protein sequence, read N- to C-terminus: Proline--tRNA ligase (569 aa).

The protein belongs to the class-II aminoacyl-tRNA synthetase family. ProS type 1 subfamily. Homodimer.

The protein localises to the cytoplasm. It carries out the reaction tRNA(Pro) + L-proline + ATP = L-prolyl-tRNA(Pro) + AMP + diphosphate. Functionally, catalyzes the attachment of proline to tRNA(Pro) in a two-step reaction: proline is first activated by ATP to form Pro-AMP and then transferred to the acceptor end of tRNA(Pro). As ProRS can inadvertently accommodate and process non-cognate amino acids such as alanine and cysteine, to avoid such errors it has two additional distinct editing activities against alanine. One activity is designated as 'pretransfer' editing and involves the tRNA(Pro)-independent hydrolysis of activated Ala-AMP. The other activity is designated 'posttransfer' editing and involves deacylation of mischarged Ala-tRNA(Pro). The misacylated Cys-tRNA(Pro) is not edited by ProRS. This is Proline--tRNA ligase from Halalkalibacterium halodurans (strain ATCC BAA-125 / DSM 18197 / FERM 7344 / JCM 9153 / C-125) (Bacillus halodurans).